The primary structure comprises 295 residues: Acetyl-coenzyme A carboxylase carboxyl transferase subunit beta (295 aa).

The region spanning 25–294 (VWTKCTSCEQ…PFNAEELSDT (270 aa)) is the CoA carboxyltransferase N-terminal domain. Cys29, Cys32, Cys48, and Cys51 together coordinate Zn(2+). The C4-type zinc finger occupies 29-51 (CTSCEQVLYRDELKRHLEVCPKC).

It belongs to the AccD/PCCB family. As to quaternary structure, acetyl-CoA carboxylase is a heterohexamer composed of biotin carboxyl carrier protein (AccB), biotin carboxylase (AccC) and two subunits each of ACCase subunit alpha (AccA) and ACCase subunit beta (AccD). The cofactor is Zn(2+).

It localises to the cytoplasm. The enzyme catalyses N(6)-carboxybiotinyl-L-lysyl-[protein] + acetyl-CoA = N(6)-biotinyl-L-lysyl-[protein] + malonyl-CoA. It functions in the pathway lipid metabolism; malonyl-CoA biosynthesis; malonyl-CoA from acetyl-CoA: step 1/1. Component of the acetyl coenzyme A carboxylase (ACC) complex. Biotin carboxylase (BC) catalyzes the carboxylation of biotin on its carrier protein (BCCP) and then the CO(2) group is transferred by the transcarboxylase to acetyl-CoA to form malonyl-CoA. In Mannheimia succiniciproducens (strain KCTC 0769BP / MBEL55E), this protein is Acetyl-coenzyme A carboxylase carboxyl transferase subunit beta.